A 163-amino-acid chain; its full sequence is ATP synthase subunit b (163 aa).

Residues 10-29 (ALYQLLAFSVLLFFLSKFAL) form a helical membrane-spanning segment.

It belongs to the ATPase B chain family. F-type ATPases have 2 components, F(1) - the catalytic core - and F(0) - the membrane proton channel. F(1) has five subunits: alpha(3), beta(3), gamma(1), delta(1), epsilon(1). F(0) has three main subunits: a(1), b(2) and c(10-14). The alpha and beta chains form an alternating ring which encloses part of the gamma chain. F(1) is attached to F(0) by a central stalk formed by the gamma and epsilon chains, while a peripheral stalk is formed by the delta and b chains.

It localises to the cell membrane. Functionally, f(1)F(0) ATP synthase produces ATP from ADP in the presence of a proton or sodium gradient. F-type ATPases consist of two structural domains, F(1) containing the extramembraneous catalytic core and F(0) containing the membrane proton channel, linked together by a central stalk and a peripheral stalk. During catalysis, ATP synthesis in the catalytic domain of F(1) is coupled via a rotary mechanism of the central stalk subunits to proton translocation. Component of the F(0) channel, it forms part of the peripheral stalk, linking F(1) to F(0). This Alkalihalophilus pseudofirmus (strain ATCC BAA-2126 / JCM 17055 / OF4) (Bacillus pseudofirmus) protein is ATP synthase subunit b.